Reading from the N-terminus, the 511-residue chain is V-type proton ATPase subunit B, brain isoform (511 aa).

An ATP-binding site is contributed by R400.

The protein belongs to the ATPase alpha/beta chains family. As to quaternary structure, V-ATPase is a heteromultimeric enzyme made up of two complexes: the ATP-hydrolytic V1 complex and the proton translocation V0 complex. The V1 complex consists of three catalytic AB heterodimers that form a heterohexamer, three peripheral stalks each consisting of EG heterodimers, one central rotor including subunits D and F, and the regulatory subunits C and H. The proton translocation complex V0 consists of the proton transport subunit a, a ring of proteolipid subunits c9c'', rotary subunit d, subunits e and f, and the accessory subunits ATP6AP1/Ac45 and ATP6AP2/PRR.

Its subcellular location is the apical cell membrane. It localises to the melanosome. The protein localises to the cytoplasm. The protein resides in the cytoplasmic vesicle. It is found in the secretory vesicle. Its subcellular location is the synaptic vesicle membrane. It localises to the clathrin-coated vesicle membrane. Non-catalytic subunit of the V1 complex of vacuolar(H+)-ATPase (V-ATPase), a multisubunit enzyme composed of a peripheral complex (V1) that hydrolyzes ATP and a membrane integral complex (V0) that translocates protons. V-ATPase is responsible for acidifying and maintaining the pH of intracellular compartments and in some cell types, is targeted to the plasma membrane, where it is responsible for acidifying the extracellular environment. In renal intercalated cells, can partially compensate the lack of ATP6V1B1 and mediate secretion of protons (H+) into the urine under base-line conditions but not in conditions of acid load. The protein is V-type proton ATPase subunit B, brain isoform (ATP6V1B2) of Pongo abelii (Sumatran orangutan).